The following is a 332-amino-acid chain: Glycerol-3-phosphate dehydrogenase [NAD(P)+] (332 aa).

Residues Trp13, Lys34, and Lys108 each contribute to the NADPH site. The sn-glycerol 3-phosphate site is built by Lys108, Gly136, and Ser138. Ala140 is an NADPH binding site. Sn-glycerol 3-phosphate-binding residues include Lys191, Asp244, Ser254, Arg255, and Asn256. Residue Lys191 is the Proton acceptor of the active site. Arg255 lines the NADPH pocket. Residues Val279 and Glu281 each contribute to the NADPH site.

The protein belongs to the NAD-dependent glycerol-3-phosphate dehydrogenase family.

The protein localises to the cytoplasm. It catalyses the reaction sn-glycerol 3-phosphate + NAD(+) = dihydroxyacetone phosphate + NADH + H(+). The catalysed reaction is sn-glycerol 3-phosphate + NADP(+) = dihydroxyacetone phosphate + NADPH + H(+). The protein operates within membrane lipid metabolism; glycerophospholipid metabolism. Catalyzes the reduction of the glycolytic intermediate dihydroxyacetone phosphate (DHAP) to sn-glycerol 3-phosphate (G3P), the key precursor for phospholipid synthesis. The chain is Glycerol-3-phosphate dehydrogenase [NAD(P)+] from Francisella tularensis subsp. mediasiatica (strain FSC147).